A 492-amino-acid polypeptide reads, in one-letter code: Glutamyl-tRNA(Gln) amidotransferase subunit A (492 aa).

Residues K78 and S158 each act as charge relay system in the active site. The active-site Acyl-ester intermediate is the S182.

The protein belongs to the amidase family. GatA subfamily. Heterotrimer of A, B and C subunits.

The catalysed reaction is L-glutamyl-tRNA(Gln) + L-glutamine + ATP + H2O = L-glutaminyl-tRNA(Gln) + L-glutamate + ADP + phosphate + H(+). Functionally, allows the formation of correctly charged Gln-tRNA(Gln) through the transamidation of misacylated Glu-tRNA(Gln) in organisms which lack glutaminyl-tRNA synthetase. The reaction takes place in the presence of glutamine and ATP through an activated gamma-phospho-Glu-tRNA(Gln). This chain is Glutamyl-tRNA(Gln) amidotransferase subunit A, found in Rhodopseudomonas palustris (strain BisB5).